Reading from the N-terminus, the 237-residue chain is Uridylate kinase (237 aa).

Position 12–15 (12–15 (KLSG)) interacts with ATP. The involved in allosteric activation by GTP stretch occupies residues 20–25 (GDEGFG). Residue G54 participates in UMP binding. Positions 55 and 59 each coordinate ATP. UMP is bound by residues D74 and 135-142 (TGSPFFTT). 3 residues coordinate ATP: T162, Y168, and D171.

It belongs to the UMP kinase family. In terms of assembly, homohexamer.

The protein resides in the cytoplasm. It carries out the reaction UMP + ATP = UDP + ADP. Its pathway is pyrimidine metabolism; CTP biosynthesis via de novo pathway; UDP from UMP (UMPK route): step 1/1. Its activity is regulated as follows. Allosterically activated by GTP. Inhibited by UTP. In terms of biological role, catalyzes the reversible phosphorylation of UMP to UDP. The sequence is that of Uridylate kinase from Mannheimia succiniciproducens (strain KCTC 0769BP / MBEL55E).